Consider the following 540-residue polypeptide: Tyrosine-protein kinase transforming protein erbB (540 aa).

A Protein kinase domain is found at 132–399 (FKKVKVLGFG…KMARDPPRYL (268 aa)). Residues 138-146 (LGFGAFGTV) and Lys165 each bind ATP. Asp257 functions as the Proton acceptor in the catalytic mechanism.

This sequence belongs to the protein kinase superfamily. Tyr protein kinase family. EGF receptor subfamily.

The enzyme catalyses L-tyrosyl-[protein] + ATP = O-phospho-L-tyrosyl-[protein] + ADP + H(+). In Avian erythroblastosis virus (strain ts167), this protein is Tyrosine-protein kinase transforming protein erbB (V-ERBB).